Consider the following 811-residue polypeptide: Abnormal pharyngeal pumping eat-20 (811 aa).

A signal peptide spans 1–20 (MTTFCRVLLIFGIYVAVSCA). Residues 21–749 (QSVEDDVFHF…GKQSSAVASW (729 aa)) are Extracellular-facing. N-linked (GlcNAc...) asparagine glycans are attached at residues N90, N171, and N232. EGF-like domains are found at residues 220-257 (PPSPCANHECHNNGTCLVSQEGAAMCLCRNGFTGDRCE), 258-293 (LDVCSAVPCQNGGVCRSNNGIAYCECPPAFSGLLCE), and 301-335 (AAPICNPECSNGQCVLKDGQPQCECRQGFTGANCN). Disulfide bonds link C224-C235, C229-C245, C247-C256, C261-C272, C266-C281, C283-C292, C305-C314, C309-C323, and C325-C334. Residue N371 is glycosylated (N-linked (GlcNAc...) asparagine). Disordered regions lie at residues 544–579 (FVSPNMPDENEEEEEDETTDETEETFPTPSTMQVAT), 592–659 (FPTT…AIST), and 690–739 (PHPQ…HTSS). Acidic residues predominate over residues 551–567 (DENEEEEEDETTDETEE). The segment covering 570–579 (PTPSTMQVAT) has biased composition (polar residues). Positions 597 to 612 (DMEETDEEEDMTEEVT) are enriched in acidic residues. Residues 626–639 (PSSTTFTTEAPTTT) show a composition bias toward low complexity. Composition is skewed to acidic residues over residues 640-655 (MEEEETTEQEEIESEE) and 705-717 (IESEEERTTESNE). A helical transmembrane segment spans residues 750 to 770 (IIATIALIVLGSLLLATSLFV). Residues 771–811 (LRYIRQSRKLHGKYNPAREEHNLSAAYAMPMSHIAKEERLI) lie on the Cytoplasmic side of the membrane.

The protein localises to the membrane. Functionally, regulates pharyngeal pumping during feeding. This is Abnormal pharyngeal pumping eat-20 (eat-20) from Caenorhabditis briggsae.